A 23-amino-acid polypeptide reads, in one-letter code: Conotoxin as25a (23 aa).

At P4 the chain carries 4-hydroxyproline; partial. Residue P23 is modified to 4-hydroxyproline; partial; alternate. P23 carries the post-translational modification Proline amide; alternate.

Post-translationally, the name as25b given in PubMed:23474143 corresponds to the hydroxylated peptide. The amidation of the C-terminus of this hydroxylated peptide is not directly confirmed. Contains 3 disulfide bonds. As to expression, expressed by the venom duct.

The protein resides in the secreted. In terms of biological role, upon intracranial injection in mice, as25a (the toxin without the two 4-hydroxyprolines) provokes paralysis of the hind limbs and death with a dose of 240 pmol. The sequence is that of Conotoxin as25a from Conus cancellatus (Cancellate cone).